The following is a 238-amino-acid chain: MRIERVDDTTVKLFITYGDIESRGFKREDLWTNRQRGEEFFWSMMEEINEEEDFVVEGPLWIQVHAFEKGVEVVISKSKNEEMMNMADDNMNNEFDRQLNELLEQSFEDENEESVQGNQQQRRSHASDHSKRARHTNGRLVIVKFEDLESVIDYAHHSNQPTDDFEDLLYMLNNEYYYAIHFDDNVGEEVINDFYSQLLEFTQPSDRSEMYLNDYAKIIMSHNVTAQVRRFFTDTEEI.

A disordered region spans residues Glu108–Ala133.

This sequence belongs to the MecA family. As to quaternary structure, homodimer.

Enables the recognition and targeting of unfolded and aggregated proteins to the ClpC protease or to other proteins involved in proteolysis. This Staphylococcus carnosus (strain TM300) protein is Adapter protein MecA.